Consider the following 275-residue polypeptide: Large ribosomal subunit protein uL2c (275 aa).

Positions 225–259 are disordered; it reads KNPVDHPHGGGEGRAPIGRSTPVTPWGKPALGRRT.

The protein belongs to the universal ribosomal protein uL2 family. In terms of assembly, part of the 50S ribosomal subunit.

Its subcellular location is the plastid. It is found in the cyanelle. This chain is Large ribosomal subunit protein uL2c (rpl2), found in Cyanophora paradoxa.